Reading from the N-terminus, the 120-residue chain is MIF-like protein mif-2 (120 aa).

It belongs to the MIF family.

The polypeptide is MIF-like protein mif-2 (mif-2) (Caenorhabditis elegans).